A 178-amino-acid chain; its full sequence is Non-specific lipid transfer protein-like 1 (178 aa).

The first 26 residues, 1–26 (MAVAARAAAVACLLVVGLAAVAGVDG), serve as a signal peptide directing secretion. 2 cysteine pairs are disulfide-bonded: C50–C68 and C69–C110. Residue N99 is glycosylated (N-linked (GlcNAc...) asparagine). A lipid anchor (GPI-anchor amidated alanine) is attached at A149. The propeptide at 150–178 (AARSPMASTTAVLVVAAAVAAPLLAFFHF) is removed in mature form.

It belongs to the plant LTP family. O-glycosylated on hydroxyprolines; noncontiguous hydroxylproline residues are glycosylated with arabinogalactan. In terms of tissue distribution, expressed in roots, stems, leaves, flowers and seeds.

It localises to the vacuole. The protein resides in the aleurone grain membrane. The chain is Non-specific lipid transfer protein-like 1 (LTPL1) from Oryza sativa subsp. japonica (Rice).